Here is a 316-residue protein sequence, read N- to C-terminus: BTB/POZ domain-containing adapter for CUL3-mediated RhoA degradation protein 2 (316 aa).

A BTB domain is found at 28–96 (KYVQLNVGGS…LRDDTVTLPQ (69 aa)). Positions 268 to 279 (EATSRSRSQASP) are enriched in polar residues. The tract at residues 268–287 (EATSRSRSQASPSEDEDTFE) is disordered. Position 278 is a phosphoserine (Ser278). Ser280 is subject to Phosphoserine; by CK2.

This sequence belongs to the BACURD family. Component of the BCR(TNFAIP1) E3 ubiquitin ligase complex, at least composed of CUL3, TNFAIP1/BACURD2 and RBX1. Interacts with RHOA; with a preference for RhoA-GDP. Interacts with RHOB. Interacts with CSNK2B. Interacts with PCNA. Phosphorylation at Ser-280 by CK2 facilitates the nucleus localization and increases interaction with PCNA.

It is found in the cytoplasm. It localises to the nucleus. The protein localises to the endosome. The protein operates within protein modification; protein ubiquitination. Its function is as follows. Substrate-specific adapter of a BCR (BTB-CUL3-RBX1) E3 ubiquitin-protein ligase complex involved in regulation of cytoskeleton structure. The BCR(TNFAIP1) E3 ubiquitin ligase complex mediates the ubiquitination of RHOA, leading to its degradation by the proteasome, thereby regulating the actin cytoskeleton and cell migration. Its interaction with RHOB may regulate apoptosis. May enhance the PCNA-dependent DNA polymerase delta activity. This chain is BTB/POZ domain-containing adapter for CUL3-mediated RhoA degradation protein 2 (Tnfaip1), found in Rattus norvegicus (Rat).